Consider the following 100-residue polypeptide: Small ribosomal subunit protein uS14c (100 aa).

The protein belongs to the universal ribosomal protein uS14 family. In terms of assembly, part of the 30S ribosomal subunit.

It is found in the plastid. Its subcellular location is the chloroplast. In terms of biological role, binds 16S rRNA, required for the assembly of 30S particles. The protein is Small ribosomal subunit protein uS14c of Lepidium virginicum (Virginia pepperweed).